A 596-amino-acid polypeptide reads, in one-letter code: MFGIQENIPRGGTTMKEEPLGSGMNPVRSWMHTAGVVDANTAAQSGVGLARAHFEKQPPSNLRKSNFFHFVLALYDRQGQPVEIERTAFVDFVEKEKEPNNEKTNNGIHYKLQLLYSNGVRTEQDLYVRLIDSMTKQAIVYEGQDKNPEMCRVLLTHEIMCSRCCDKKSCGNRNETPSDPVIIDRFFLKFFLKCNQNCLKNAGNPRDMRRFQVVVSTTVNVDGHVLAVSDNMFVHNNSKHGRRARRLDPSEGTAPSYLENATPCIKAISPSEGWTTGGATVIIIGDNFFDGLQVVFGTMLVWSELITPHAIRVQTPPRHIPGVVEVTLSYKSKQFCKGAPGRFVYTALNEPTIDYGFQRLQKVIPRHPGDPERLPKEVLLKRAADLVEALYGMPHNNQEIILKRAADIAEALYSVPRNHNQIPTLGNNPAHTGMMGVNSFSSQLAVNVSETSQANDQVGYSRNTSSVSPRGYVPSSTPQQSNYNTVSTSMNGYGSGAMASLGVPGSPGFLNGSSANSPYGIVPSSPTMAASSVTLPSNCSSTHGIFSFSPANVISAVKQKSAFAPVVRPQASPPPSCTSANGNGLQAMSGLVVPPM.

The disordered stretch occupies residues 1–22; sequence MFGIQENIPRGGTTMKEEPLGS. The interval 63 to 66 is interaction with DNA; sequence RKSN. The C5-type zinc finger occupies 151 to 170; it reads CRVLLTHEIMCSRCCDKKSC. Interaction with DNA regions lie at residues 197–204 and 236–239; these read NCLKNAGN and NNSK. The IPT/TIG domain occupies 263–346; it reads PCIKAISPSE…KGAPGRFVYT (84 aa). The disordered stretch occupies residues 451 to 483; it reads TSQANDQVGYSRNTSSVSPRGYVPSSTPQQSNY.

This sequence belongs to the COE family. In terms of assembly, forms either a homodimer or a heterodimer with a related family member. In terms of tissue distribution, expressed in brain.

It is found in the nucleus. In terms of biological role, transcriptional activator. Recognizes variations of the palindromic sequence 5'-ATTCCCNNGGGAATT-3'. This chain is Transcription factor COE3 (EBF3), found in Homo sapiens (Human).